The chain runs to 570 residues: Proline--tRNA ligase (570 aa).

This sequence belongs to the class-II aminoacyl-tRNA synthetase family. ProS type 1 subfamily. As to quaternary structure, homodimer.

The protein resides in the cytoplasm. The enzyme catalyses tRNA(Pro) + L-proline + ATP = L-prolyl-tRNA(Pro) + AMP + diphosphate. Catalyzes the attachment of proline to tRNA(Pro) in a two-step reaction: proline is first activated by ATP to form Pro-AMP and then transferred to the acceptor end of tRNA(Pro). As ProRS can inadvertently accommodate and process non-cognate amino acids such as alanine and cysteine, to avoid such errors it has two additional distinct editing activities against alanine. One activity is designated as 'pretransfer' editing and involves the tRNA(Pro)-independent hydrolysis of activated Ala-AMP. The other activity is designated 'posttransfer' editing and involves deacylation of mischarged Ala-tRNA(Pro). The misacylated Cys-tRNA(Pro) is not edited by ProRS. This chain is Proline--tRNA ligase, found in Shewanella pealeana (strain ATCC 700345 / ANG-SQ1).